The following is a 358-amino-acid chain: Bi-functional coumaroyl CoA and feruloyl CoA ortho-hydroxylase F6H2-2-1 (358 aa).

The Fe2OG dioxygenase domain occupies 200-308 (SKESLLMGSR…RISVPVFVNP (109 aa)). Y216 contacts 2-oxoglutarate. Fe cation contacts are provided by H231, D233, and H289. Residues R299 and S301 each contribute to the 2-oxoglutarate site.

It belongs to the iron/ascorbate-dependent oxidoreductase family. L-ascorbate serves as cofactor. It depends on Fe(2+) as a cofactor. As to expression, mostly expressed in underground stems and stems.

The enzyme catalyses (E)-4-coumaroyl-CoA + 2-oxoglutarate + O2 = (E)-2,4-dihydroxycinnamoyl-CoA + succinate + CO2. It catalyses the reaction (E)-feruloyl-CoA + 2-oxoglutarate + O2 = (E)-6-hydroxyferuloyl-CoA + succinate + CO2. It participates in phenylpropanoid metabolism. In terms of biological role, 2-oxoglutarate (OG)- and Fe(II)-dependent dioxygenase (2OGD) involved in scopoletin and umbelliferone biosynthesis. Converts feruloyl CoA into 6'-hydroxyferuloyl CoA, and p-coumaroyl CoA into 2,4-dihydroxycinnamoyl-CoA, but has no activity toward caffeoyl-CoA. In Ipomoea batatas (Sweet potato), this protein is Bi-functional coumaroyl CoA and feruloyl CoA ortho-hydroxylase F6H2-2-1.